The chain runs to 137 residues: ATP synthase epsilon chain, chloroplastic (137 aa).

This sequence belongs to the ATPase epsilon chain family. In terms of assembly, F-type ATPases have 2 components, CF(1) - the catalytic core - and CF(0) - the membrane proton channel. CF(1) has five subunits: alpha(3), beta(3), gamma(1), delta(1), epsilon(1). CF(0) has three main subunits: a, b and c.

The protein resides in the plastid. It is found in the chloroplast thylakoid membrane. Functionally, produces ATP from ADP in the presence of a proton gradient across the membrane. The protein is ATP synthase epsilon chain, chloroplastic of Bigelowiella natans (Pedinomonas minutissima).